Consider the following 222-residue polypeptide: uncharacterized protein (222 aa).

Residues 8 to 77 (AKKNQIIYRY…NTPGYFVCKD (70 aa)) form the HTH gntR-type domain.

This is an uncharacterized protein from Mycoplasma genitalium (strain ATCC 33530 / DSM 19775 / NCTC 10195 / G37) (Mycoplasmoides genitalium).